A 238-amino-acid chain; its full sequence is MRVAILRITERSWEINTMLPWKSSKKFSNHSIASTSKWLVHQVANFVTWHETAKKCGAKIRVLPILDNWLIDENVLISTLSEKTKLVALNFVSNVTGTEQPIKRLIQLIRKHSHALVLVDAAQAISHIKIDLQDLDADFLAFSAHKIYGPNGLGVLTGKLTALSQLQPLFFGGKMVERVSNNRITFAELPYRLEAGTPNIAGVIGFNAVLDWLQKWDFTAAEQHAISLAESVKVRRNF.

Position 146 is an N6-(pyridoxal phosphate)lysine (lysine 146).

The protein belongs to the class-V pyridoxal-phosphate-dependent aminotransferase family. Csd subfamily.

The protein is Putative csd-like protein HI_1343 of Haemophilus influenzae (strain ATCC 51907 / DSM 11121 / KW20 / Rd).